Here is a 141-residue protein sequence, read N- to C-terminus: Large ribosomal subunit protein uL11 (141 aa).

It belongs to the universal ribosomal protein uL11 family. In terms of assembly, part of the ribosomal stalk of the 50S ribosomal subunit. Interacts with L10 and the large rRNA to form the base of the stalk. L10 forms an elongated spine to which L12 dimers bind in a sequential fashion forming a multimeric L10(L12)X complex. One or more lysine residues are methylated.

Its function is as follows. Forms part of the ribosomal stalk which helps the ribosome interact with GTP-bound translation factors. The sequence is that of Large ribosomal subunit protein uL11 from Chlorobium phaeovibrioides (strain DSM 265 / 1930) (Prosthecochloris vibrioformis (strain DSM 265)).